A 625-amino-acid polypeptide reads, in one-letter code: Sphingomyelin phosphodiesterase (625 aa).

A disordered region spans residues Met1–Ala20. The N-terminal stretch at Met1–Ala40 is a signal peptide. Residues Trp81–Asp165 enclose the Saposin B-type domain. N-linked (GlcNAc...) asparagine glycosylation occurs at Asn82. Intrachain disulfides connect Cys85-Cys161, Cys88-Cys153, and Cys116-Cys127. A glycan (N-linked (GlcNAc...) asparagine) is linked at Asn171. Residues Asp202 and His204 each contribute to the Zn(2+) site. Intrachain disulfides connect Cys217–Cys222 and Cys223–Cys246. Zn(2+)-binding residues include Asp274 and Asn314. Asn331 and Asn391 each carry an N-linked (GlcNAc...) asparagine glycan. A disulfide bridge links Cys381 with Cys427. Positions 421, 453, and 455 each coordinate Zn(2+). Asn499 carries an N-linked (GlcNAc...) asparagine glycan. At Ser504 the chain carries Phosphoserine. Residue Asn516 is glycosylated (N-linked (GlcNAc...) asparagine). 2 cysteine pairs are disulfide-bonded: Cys580–Cys584 and Cys590–Cys603.

This sequence belongs to the acid sphingomyelinase family. In terms of assembly, monomer. Interacts with SORT1; the interaction is required for SMPD1 targeting to lysosomes. Zn(2+) is required as a cofactor. In terms of processing, proteolytically processed. Mature lysosomal form arises from C-terminal proteolytic processing of pro-sphingomyelin phosphodiesterase. Post-translationally, both lysosomal and secreted forms are glycosylated but they show a differential pattern of glycosylation. Phosphorylated at Ser-504 by PRKCD upon stress stimuli. Phosphorylation is required for secretion. In terms of processing, this form is generated following cleavage by CASP7 in the extracellular milieu. It shows increased activity.

Its subcellular location is the lysosome. It localises to the lipid droplet. It is found in the secreted. The protein resides in the extracellular space. It catalyses the reaction a sphingomyelin + H2O = phosphocholine + an N-acylsphing-4-enine + H(+). The catalysed reaction is N-(octadecanoyl)-sphing-4-enine-1-phosphocholine + H2O = N-octadecanoylsphing-4-enine + phosphocholine + H(+). It carries out the reaction a 1,2-diacyl-sn-glycero-3-phosphocholine + H2O = phosphocholine + a 1,2-diacyl-sn-glycerol + H(+). The enzyme catalyses 1,2-dihexadecanoyl-sn-glycero-3-phosphocholine + H2O = 1,2-dihexadecanoyl-sn-glycerol + phosphocholine + H(+). Hydrolysis of liposomal sphingomyelin is stimulated by incorporation of diacylglycerol (DAG), ceramide and free fatty acids into the liposomal membranes. Phosphatidylcholine hydrolysis is inhibited by incorporation of cholesterol, ceramide, DAG, monoacylglycerol and fatty acids. In terms of biological role, converts sphingomyelin to ceramide. Exists as two enzymatic forms that arise from alternative trafficking of a single protein precursor, one that is targeted to the endolysosomal compartment, whereas the other is released extracellularly. However, in response to various forms of stress, lysosomal exocytosis may represent a major source of the secretory form. In the lysosomes, converts sphingomyelin to ceramide. Plays an important role in the export of cholesterol from the intraendolysosomal membranes. Also has phospholipase C activities toward 1,2-diacylglycerolphosphocholine and 1,2-diacylglycerolphosphoglycerol. Modulates stress-induced apoptosis through the production of ceramide. Functionally, when secreted, modulates cell signaling with its ability to reorganize the plasma membrane by converting sphingomyelin to ceramide. Secreted form is increased in response to stress and inflammatory mediators such as IL1B, IFNG or TNF as well as upon infection with bacteria and viruses. Produces the release of ceramide in the outer leaflet of the plasma membrane playing a central role in host defense. Ceramide reorganizes these rafts into larger signaling platforms that are required to internalize bacteria, induce apoptosis and regulate the cytokine response in infected cells. In wounded cells, the lysosomal form is released extracellularly in the presence of Ca(2+) and promotes endocytosis and plasma membrane repair. Its function is as follows. This form is generated following cleavage by CASP7 in the extracellular milieu in response to bacterial infection. It shows increased ability to convert sphingomyelin to ceramide and promotes plasma membrane repair. Plasma membrane repair by ceramide counteracts the action of gasdermin-D (GSDMD) perforin (PRF1) pores that are formed in response to bacterial infection. This is Sphingomyelin phosphodiesterase (SMPD1) from Bos taurus (Bovine).